The following is a 192-amino-acid chain: MNQSKQLVRLIEIAIMTAAAVILDIVSGMFLSMPQGGSVSIMMIPIFLISFRWGVKAGLTTGLLTGLVQIAIGNLFAQHPVQLLLDYIVAFAAIGISGCFASSVRKAAVSKTKGKLIVSVVSAVFIGSLLRYAAHVISGAVFFGSFAPKGTPVWIYSLTYNATYMVPSFIICAIVLCLLFMTAPRLLKSDKA.

Transmembrane regions (helical) follow at residues 10–30 (LIEI…SGMF), 31–51 (LSMP…LISF), 57–77 (AGLT…NLFA), 81–101 (VQLL…GCFA), 123–143 (AVFI…AVFF), and 164–184 (YMVP…MTAP).

It belongs to the vitamin uptake transporter (VUT/ECF) (TC 2.A.88) family. Thiamine transporter subfamily. In terms of assembly, forms a stable energy-coupling factor (ECF) transporter complex composed of a membrane-embedded substrate-binding protein (S component), two ATP-binding proteins (A components) and a transmembrane protein (T component).

It localises to the cell membrane. Its function is as follows. Probably a thiamine-binding protein that interacts with the energy-coupling factor (ECF) ABC-transporter complex. Unlike classic ABC transporters this ECF transporter provides the energy necessary to transport a number of different substrates. The substrates themselves are bound by transmembrane, not extracytoplasmic soluble proteins. The sequence is that of Thiamine transporter ThiT (thiT) from Bacillus subtilis (strain 168).